The sequence spans 261 residues: Aromatic peroxygenase (261 aa).

Cys36 contacts heme. 4 N-linked (GlcNAc...) asparagine glycosylation sites follow: Asn100, Asn137, Asn141, and Asn220.

Belongs to the chloroperoxidase family. Heme b is required as a cofactor. In terms of processing, N-glycosylated.

Its function is as follows. Aromatic peroxidase that oxidizes aryl alcohols into the corresponding aldehydes and then into the corresponding benzoic acids. Catalyzes the regioselective peroxide-dependent hydroxylation of naphthalene to 1-naphthol and to a far lesser extent 2-naphthol via a naphthalene 1,2-oxide intermediate. Halogenates phenol to 2-bromophenol and 4-bromophenol. Oxidizes the sulfur-containing heterocycle dibenzothiophene to yield sulfoxidation products, and trace amounts of ring-hydroxylation products. In Coprinellus radians (Coprophilous mushroom), this protein is Aromatic peroxygenase.